Reading from the N-terminus, the 309-residue chain is Glycine--tRNA ligase alpha subunit (309 aa).

Belongs to the class-II aminoacyl-tRNA synthetase family. Tetramer of two alpha and two beta subunits.

It localises to the cytoplasm. The enzyme catalyses tRNA(Gly) + glycine + ATP = glycyl-tRNA(Gly) + AMP + diphosphate. This Anaeromyxobacter sp. (strain K) protein is Glycine--tRNA ligase alpha subunit.